Here is a 67-residue protein sequence, read N- to C-terminus: Photosystem II reaction center protein H (67 aa).

A helical membrane pass occupies residues 27–47 (GAVPVMAFVGVLLLVFLVILL).

It belongs to the PsbH family. As to quaternary structure, PSII is composed of 1 copy each of membrane proteins PsbA, PsbB, PsbC, PsbD, PsbE, PsbF, PsbH, PsbI, PsbJ, PsbK, PsbL, PsbM, PsbT, PsbX, PsbY, Psb30/Ycf12, peripheral proteins PsbO, CyanoQ (PsbQ), PsbU, PsbV and a large number of cofactors. It forms dimeric complexes.

Its subcellular location is the cellular thylakoid membrane. Functionally, one of the components of the core complex of photosystem II (PSII), required for its stability and/or assembly. PSII is a light-driven water:plastoquinone oxidoreductase that uses light energy to abstract electrons from H(2)O, generating O(2) and a proton gradient subsequently used for ATP formation. It consists of a core antenna complex that captures photons, and an electron transfer chain that converts photonic excitation into a charge separation. This Prochlorococcus marinus (strain SARG / CCMP1375 / SS120) protein is Photosystem II reaction center protein H.